We begin with the raw amino-acid sequence, 537 residues long: uncharacterized protein (537 aa).

An N-terminal signal peptide occupies residues 1–15 (MALFQLFSFLNVTLG). 2 consecutive transmembrane segments (helical) span residues 459–479 (VLFSAISACLSFIIDVGGCCF) and 490–510 (VILLLLLLPNYTHLTFILGFT).

Its subcellular location is the host membrane. This is an uncharacterized protein from Citrus sinensis (Sweet orange).